The primary structure comprises 101 residues: Protein Tat (101 aa).

The segment at 1-24 is interaction with human CREBBP; the sequence is MEPVDPNLEPWKHPGSQPRTACNN. A transactivation region spans residues 1 to 48; it reads MEPVDPNLEPWKHPGSQPRTACNNCYCKKCCFHCQVCFTKKGLGISYG. Cys22, Cys25, and Cys27 together coordinate Zn(2+). Residues 22–37 form a cysteine-rich region; it reads CNNCYCKKCCFHCQVC. At Lys28 the chain carries N6-acetyllysine; by host PCAF. Zn(2+) contacts are provided by Cys30, His33, Cys34, and Cys37. Residues 38-48 form a core region; sequence FTKKGLGISYG. A disordered region spans residues 47–101; it reads YGRKKRRQRRRPPQDSQTHQSSLSKQPTSQLRGDPTGPTESKKKVERETETDPVH. A compositionally biased stretch (basic residues) spans 48-57; it reads GRKKRRQRRR. The Nuclear localization signal, RNA-binding (TAR), and protein transduction signature appears at 49-57; sequence RKKRRQRRR. An interaction with the host capping enzyme RNGTT region spans residues 49–86; the sequence is RKKRRQRRRPPQDSQTHQSSLSKQPTSQLRGDPTGPTE. N6-acetyllysine; by host EP300 and GCN5L2 occurs at positions 50 and 51. An asymmetric dimethylarginine; by host PRMT6 mark is found at Arg52 and Arg53. Positions 61–77 are enriched in polar residues; that stretch reads DSQTHQSSLSKQPTSQL. Lys71 participates in a covalent cross-link: Glycyl lysine isopeptide (Lys-Gly) (interchain with G-Cter in ubiquitin). The Cell attachment site signature appears at 78–80; sequence RGD. Positions 86 to 101 are enriched in basic and acidic residues; it reads ESKKKVERETETDPVH.

Belongs to the lentiviruses Tat family. As to quaternary structure, interacts with host CCNT1. Associates with the P-TEFb complex composed at least of Tat, P-TEFb (CDK9 and CCNT1), TAR RNA, RNA Pol II. Recruits the HATs CREBBP, TAF1/TFIID, EP300, PCAF and GCN5L2. Interacts with host KAT5/Tip60; this interaction targets the latter to degradation. Interacts with the host deacetylase SIRT1. Interacts with host capping enzyme RNGTT; this interaction stimulates RNGTT. Binds to host KDR, and to the host integrins ITGAV/ITGB3 and ITGA5/ITGB1. Interacts with host KPNB1/importin beta-1 without previous binding to KPNA1/importin alpha-1. Interacts with EIF2AK2. Interacts with host nucleosome assembly protein NAP1L1; this interaction may be required for the transport of Tat within the nucleus, since the two proteins interact at the nuclear rim. Interacts with host C1QBP/SF2P32; this interaction involves lysine-acetylated Tat. Interacts with the host chemokine receptors CCR2, CCR3 and CXCR4. Interacts with host DPP4/CD26; this interaction may trigger an anti-proliferative effect. Interacts with host LDLR. Interacts with the host extracellular matrix metalloproteinase MMP1. Interacts with host PRMT6; this interaction mediates Tat's methylation. Interacts with, and is ubiquitinated by MDM2/Hdm2. Interacts with host PSMC3 and HTATIP2. Interacts with STAB1; this interaction may overcome SATB1-mediated repression of IL2 and IL2RA (interleukin) in T cells by binding to the same domain than HDAC1. Interacts (when acetylated) with human CDK13, thereby increasing HIV-1 mRNA splicing and promoting the production of the doubly spliced HIV-1 protein Nef. Interacts with host TBP; this interaction modulates the activity of transcriptional pre-initiation complex. Interacts with host RELA. Interacts with host PLSCR1; this interaction negatively regulates Tat transactivation activity by altering its subcellular distribution. In terms of processing, asymmetrical arginine methylation by host PRMT6 seems to diminish the transactivation capacity of Tat and affects the interaction with host CCNT1. Acetylation by EP300, CREBBP, GCN5L2/GCN5 and PCAF regulates the transactivation activity of Tat. EP300-mediated acetylation of Lys-50 promotes dissociation of Tat from the TAR RNA through the competitive binding to PCAF's bromodomain. In addition, the non-acetylated Tat's N-terminus can also interact with PCAF. PCAF-mediated acetylation of Lys-28 enhances Tat's binding to CCNT1. Lys-50 is deacetylated by SIRT1. Post-translationally, polyubiquitination by host MDM2 does not target Tat to degradation, but activates its transactivation function and fosters interaction with CCNT1 and TAR RNA. In terms of processing, phosphorylated by EIF2AK2 on serine and threonine residues adjacent to the basic region important for TAR RNA binding and function. Phosphorylation of Tat by EIF2AK2 is dependent on the prior activation of EIF2AK2 by dsRNA.

Its subcellular location is the host nucleus. It is found in the host nucleolus. It localises to the host cytoplasm. The protein localises to the secreted. Its function is as follows. Transcriptional activator that increases RNA Pol II processivity, thereby increasing the level of full-length viral transcripts. Recognizes a hairpin structure at the 5'-LTR of the nascent viral mRNAs referred to as the transactivation responsive RNA element (TAR) and recruits the cyclin T1-CDK9 complex (P-TEFb complex) that will in turn hyperphosphorylate the RNA polymerase II to allow efficient elongation. The CDK9 component of P-TEFb and other Tat-activated kinases hyperphosphorylate the C-terminus of RNA Pol II that becomes stabilized and much more processive. Other factors such as HTATSF1/Tat-SF1, SUPT5H/SPT5, and HTATIP2 are also important for Tat's function. Besides its effect on RNA Pol II processivity, Tat induces chromatin remodeling of proviral genes by recruiting the histone acetyltransferases (HATs) CREBBP, EP300 and PCAF to the chromatin. This also contributes to the increase in proviral transcription rate, especially when the provirus integrates in transcriptionally silent region of the host genome. To ensure maximal activation of the LTR, Tat mediates nuclear translocation of NF-kappa-B by interacting with host RELA. Through its interaction with host TBP, Tat may also modulate transcription initiation. Tat can reactivate a latently infected cell by penetrating in it and transactivating its LTR promoter. In the cytoplasm, Tat is thought to act as a translational activator of HIV-1 mRNAs. Extracellular circulating Tat can be endocytosed by surrounding uninfected cells via the binding to several surface receptors such as CD26, CXCR4, heparan sulfate proteoglycans (HSPG) or LDLR. Neurons are rarely infected, but they internalize Tat via their LDLR. Through its interaction with nuclear HATs, Tat is potentially able to control the acetylation-dependent cellular gene expression. Modulates the expression of many cellular genes involved in cell survival, proliferation or in coding for cytokines or cytokine receptors. Tat plays a role in T-cell and neurons apoptosis. Tat induced neurotoxicity and apoptosis probably contribute to neuroAIDS. Circulating Tat also acts as a chemokine-like and/or growth factor-like molecule that binds to specific receptors on the surface of the cells, affecting many cellular pathways. In the vascular system, Tat binds to ITGAV/ITGB3 and ITGA5/ITGB1 integrins dimers at the surface of endothelial cells and competes with bFGF for heparin-binding sites, leading to an excess of soluble bFGF. This chain is Protein Tat, found in Human immunodeficiency virus type 1 group M subtype B (isolate YU-2) (HIV-1).